The sequence spans 372 residues: Chaperone protein DnaJ (372 aa).

Residues 5-70 form the J domain; it reads DYYDVLGVER…QKRANYDQYG (66 aa). The CR-type zinc finger occupies 130 to 208; that stretch reads GTTKDIQINT…CHGDGRVHKK (79 aa). Residues C143, C146, C160, C163, C182, C185, C196, and C199 each contribute to the Zn(2+) site. CXXCXGXG motif repeat units follow at residues 143-150, 160-167, 182-189, and 196-203; these read CDSCDGSG, CSTCHGAG, CPSCHGSG, and CKSCHGDG.

It belongs to the DnaJ family. Homodimer. Requires Zn(2+) as cofactor.

The protein localises to the cytoplasm. Functionally, participates actively in the response to hyperosmotic and heat shock by preventing the aggregation of stress-denatured proteins and by disaggregating proteins, also in an autonomous, DnaK-independent fashion. Unfolded proteins bind initially to DnaJ; upon interaction with the DnaJ-bound protein, DnaK hydrolyzes its bound ATP, resulting in the formation of a stable complex. GrpE releases ADP from DnaK; ATP binding to DnaK triggers the release of the substrate protein, thus completing the reaction cycle. Several rounds of ATP-dependent interactions between DnaJ, DnaK and GrpE are required for fully efficient folding. Also involved, together with DnaK and GrpE, in the DNA replication of plasmids through activation of initiation proteins. The chain is Chaperone protein DnaJ from Pasteurella multocida (strain Pm70).